Consider the following 498-residue polypeptide: ATP synthase subunit beta, chloroplastic (498 aa).

ATP is bound at residue 172-179; that stretch reads GGAGVGKT.

Belongs to the ATPase alpha/beta chains family. F-type ATPases have 2 components, CF(1) - the catalytic core - and CF(0) - the membrane proton channel. CF(1) has five subunits: alpha(3), beta(3), gamma(1), delta(1), epsilon(1). CF(0) has four main subunits: a(1), b(1), b'(1) and c(9-12).

It localises to the plastid. Its subcellular location is the chloroplast thylakoid membrane. The enzyme catalyses ATP + H2O + 4 H(+)(in) = ADP + phosphate + 5 H(+)(out). Produces ATP from ADP in the presence of a proton gradient across the membrane. The catalytic sites are hosted primarily by the beta subunits. This Brasenia schreberi (Water shield) protein is ATP synthase subunit beta, chloroplastic.